We begin with the raw amino-acid sequence, 433 residues long: Mitochondrial inner membrane protein OXA1L (433 aa).

The Mitochondrial intermembrane segment spans residues 1–108; it reads MARNLVCGRW…QCATEPSFTE (108 aa). A helical transmembrane segment spans residues 109–129; it reads LGLGSYTPVGLIQNLLEYIHV. Over 130–134 the chain is Mitochondrial matrix; sequence DLGLP. The chain crosses the membrane as a helical span at residues 135–155; it reads WWGAIATCTVLARCLVFPLIV. The Mitochondrial intermembrane portion of the chain corresponds to 156–207; sequence KGQREAAKIHNHMPEMQKFSARIREAKLAGDQAEFYKATIEMTRYQKKHDIK. Residues 208 to 228 form a helical membrane-spanning segment; the sequence is LLRPLILPLTQAPVFISFFIA. At 229 to 255 the chain is on the mitochondrial matrix side; sequence LREMANLPVPSLQTGGLWWFQDLTVSD. Residues 256 to 276 traverse the membrane as a helical segment; that stretch reads PIYVLPLVVTATMWCVLELGA. Residues 277–293 lie on the Mitochondrial intermembrane side of the membrane; it reads ETGVQSNDLQFMRNIIR. The helical transmembrane segment at 294–314 threads the bilayer; it reads VMPLVVLPVTIHFPSAVFMYW. At 315–433 the chain is on the mitochondrial matrix side; it reads LSSNVFSLCQ…AKKPWQDTLG (119 aa). Phosphoserine is present on S359. A phosphothreonine mark is found at T395 and T397. The segment at 397–433 is disordered; the sequence is THNPLLQHDPSHPPKAPNSNNSSIKANAKKPWQDTLG. The segment covering 413–426 has biased composition (low complexity); sequence PNSNNSSIKANAKK.

Belongs to the OXA1/ALB3/YidC family. As to quaternary structure, monomer; predominantly monomeric at low salt concentrations. Homooligomer; predominantly homooligomeric at high salt concentrations. Associates with the mitochondrial ribosome. Associates preferentially as a dimer with the large ribosomal subunit 39S of the mitochondrial ribosome. Interacts with OXA1L; promoting cotranslational quality control in mitochondria.

The protein localises to the mitochondrion inner membrane. Its function is as follows. Mitochondrial membrane insertase that mediates the cotranslational insertion of integral membrane proteins into the mitochondrial inner membrane. Essential for the activity and assembly of cytochrome oxidase. Required for the correct biogenesis of ATP synthase and complex I in mitochondria. This is Mitochondrial inner membrane protein OXA1L (Oxa1l) from Mus musculus (Mouse).